The chain runs to 590 residues: Aspartate--tRNA(Asp/Asn) ligase (590 aa).

Glu-175 is a binding site for L-aspartate. Positions 199-202 (QQYK) are aspartate. L-aspartate-binding residues include Arg-221 and His-450. 221–223 (RDE) provides a ligand contact to ATP. Residue Glu-484 coordinates ATP. Arg-491 serves as a coordination point for L-aspartate. 536–539 (GVDR) lines the ATP pocket.

It belongs to the class-II aminoacyl-tRNA synthetase family. Type 1 subfamily. In terms of assembly, homodimer.

It localises to the cytoplasm. It carries out the reaction tRNA(Asx) + L-aspartate + ATP = L-aspartyl-tRNA(Asx) + AMP + diphosphate. Aspartyl-tRNA synthetase with relaxed tRNA specificity since it is able to aspartylate not only its cognate tRNA(Asp) but also tRNA(Asn). Reaction proceeds in two steps: L-aspartate is first activated by ATP to form Asp-AMP and then transferred to the acceptor end of tRNA(Asp/Asn). This chain is Aspartate--tRNA(Asp/Asn) ligase, found in Nitrobacter winogradskyi (strain ATCC 25391 / DSM 10237 / CIP 104748 / NCIMB 11846 / Nb-255).